The following is a 350-amino-acid chain: 2-oxoglutarate-dependent ethylene/succinate-forming enzyme (350 aa).

One can recognise a Fe2OG dioxygenase domain in the interval 166–286; the sequence is GWHHMRVLRF…RFACAYFHEP (121 aa). Residues histidine 189 and histidine 268 each contribute to the Fe cation site.

Belongs to the iron/ascorbate-dependent oxidoreductase family. Monomer. The cofactor is Fe(2+).

The enzyme catalyses 2-oxoglutarate + O2 + 2 H(+) = ethene + 3 CO2 + H2O. It catalyses the reaction L-arginine + 2-oxoglutarate + O2 = guanidine + L-glutamate 5-semialdehyde + succinate + CO2. It participates in alkene biosynthesis; ethylene biosynthesis via 2-oxoglutarate. With respect to regulation, activated by catalase. Inhibited by chelating reagents such as EDTA and Tiron (4,5-dihydroxy-1,3-benzene disulphonic acid), and by DTNB (5,5'-dithio-bis-2-nitrobenzoate) and hydrogen peroxide. In terms of biological role, simultaneously catalyzes two reactions, namely formation of ethylene and of succinate from 2-oxoglutarate, with a molar ratio of 2:1. In Pseudomonas savastanoi pv. phaseolicola (Pseudomonas syringae pv. phaseolicola), this protein is 2-oxoglutarate-dependent ethylene/succinate-forming enzyme (efe).